The chain runs to 453 residues: Cobyrinate a,c-diamide synthase (453 aa).

A GATase cobBQ-type domain is found at 250 to 440 (RIAVPFDEAF…IHTHTACLPD (191 aa)). Residue C332 is the Nucleophile of the active site.

It belongs to the CobB/CbiA family. Mg(2+) is required as a cofactor.

It catalyses the reaction cob(II)yrinate + 2 L-glutamine + 2 ATP + 2 H2O = cob(II)yrinate a,c diamide + 2 L-glutamate + 2 ADP + 2 phosphate + 2 H(+). It carries out the reaction Ni-sirohydrochlorin + 2 L-glutamine + 2 ATP + 2 H2O = Ni-sirohydrochlorin a,c-diamide + 2 L-glutamate + 2 ADP + 2 phosphate + 2 H(+). It functions in the pathway cofactor biosynthesis; adenosylcobalamin biosynthesis; cob(II)yrinate a,c-diamide from sirohydrochlorin (anaerobic route): step 10/10. In terms of biological role, catalyzes the ATP-dependent amidation of the two carboxylate groups at positions a and c of cobyrinate, using either L-glutamine or ammonia as the nitrogen source. Involved in the biosynthesis of the unique nickel-containing tetrapyrrole coenzyme F430, the prosthetic group of methyl-coenzyme M reductase (MCR), which plays a key role in methanogenesis and anaerobic methane oxidation. Catalyzes the ATP-dependent amidation of the two carboxylate groups at positions a and c of Ni-sirohydrochlorin, using L-glutamine or ammonia as the nitrogen source. This is Cobyrinate a,c-diamide synthase from Methanosphaera stadtmanae (strain ATCC 43021 / DSM 3091 / JCM 11832 / MCB-3).